The sequence spans 118 residues: Large ribosomal subunit protein bL20 (118 aa).

This sequence belongs to the bacterial ribosomal protein bL20 family.

Functionally, binds directly to 23S ribosomal RNA and is necessary for the in vitro assembly process of the 50S ribosomal subunit. It is not involved in the protein synthesizing functions of that subunit. This chain is Large ribosomal subunit protein bL20, found in Pectobacterium atrosepticum (strain SCRI 1043 / ATCC BAA-672) (Erwinia carotovora subsp. atroseptica).